Consider the following 178-residue polypeptide: ATP synthase subunit b (178 aa).

Residues 19 to 39 (ITGIGFVILLFIAIKYIVPAF) form a helical membrane-spanning segment.

The protein belongs to the ATPase B chain family. F-type ATPases have 2 components, F(1) - the catalytic core - and F(0) - the membrane proton channel. F(1) has five subunits: alpha(3), beta(3), gamma(1), delta(1), epsilon(1). F(0) has three main subunits: a(1), b(2) and c(10-14). The alpha and beta chains form an alternating ring which encloses part of the gamma chain. F(1) is attached to F(0) by a central stalk formed by the gamma and epsilon chains, while a peripheral stalk is formed by the delta and b chains.

The protein resides in the cell membrane. In terms of biological role, f(1)F(0) ATP synthase produces ATP from ADP in the presence of a proton or sodium gradient. F-type ATPases consist of two structural domains, F(1) containing the extramembraneous catalytic core and F(0) containing the membrane proton channel, linked together by a central stalk and a peripheral stalk. During catalysis, ATP synthesis in the catalytic domain of F(1) is coupled via a rotary mechanism of the central stalk subunits to proton translocation. Component of the F(0) channel, it forms part of the peripheral stalk, linking F(1) to F(0). The chain is ATP synthase subunit b from Kocuria rhizophila (strain ATCC 9341 / DSM 348 / NBRC 103217 / DC2201).